The primary structure comprises 228 residues: Demethylmenaquinone methyltransferase (228 aa).

S-adenosyl-L-methionine contacts are provided by residues Thr62, Asp80, 100-101 (DA), and Ser117.

It belongs to the class I-like SAM-binding methyltransferase superfamily. MenG/UbiE family.

The enzyme catalyses a 2-demethylmenaquinol + S-adenosyl-L-methionine = a menaquinol + S-adenosyl-L-homocysteine + H(+). It participates in quinol/quinone metabolism; menaquinone biosynthesis; menaquinol from 1,4-dihydroxy-2-naphthoate: step 2/2. In terms of biological role, methyltransferase required for the conversion of demethylmenaquinol (DMKH2) to menaquinol (MKH2). This Mycolicibacterium vanbaalenii (strain DSM 7251 / JCM 13017 / BCRC 16820 / KCTC 9966 / NRRL B-24157 / PYR-1) (Mycobacterium vanbaalenii) protein is Demethylmenaquinone methyltransferase.